We begin with the raw amino-acid sequence, 445 residues long: NADH-quinone oxidoreductase subunit F (445 aa).

61-70 serves as a coordination point for NAD(+); the sequence is GRGGAGFSTG. 174-221 lines the FMN pocket; that stretch reads GAGRYICGEETALINSLEGRRANPRSKPPFPATSGAWGKPTCVNNVET. [4Fe-4S] cluster contacts are provided by Cys351, Cys354, Cys357, and Cys398.

It belongs to the complex I 51 kDa subunit family. As to quaternary structure, composed of 13 different subunits. Subunits NuoCD, E, F, and G constitute the peripheral sector of the complex. The cofactor is FMN. Requires [4Fe-4S] cluster as cofactor.

The enzyme catalyses a quinone + NADH + 5 H(+)(in) = a quinol + NAD(+) + 4 H(+)(out). NDH-1 shuttles electrons from NADH, via FMN and iron-sulfur (Fe-S) centers, to quinones in the respiratory chain. The immediate electron acceptor for the enzyme in this species is believed to be ubiquinone. Couples the redox reaction to proton translocation (for every two electrons transferred, four hydrogen ions are translocated across the cytoplasmic membrane), and thus conserves the redox energy in a proton gradient. This is NADH-quinone oxidoreductase subunit F (nuoF) from Escherichia coli (strain K12).